The sequence spans 246 residues: MKISDVRSKAFAMPLTSPAFPMGPYRFVDREFLIITYRTDPDRLREIVPEPLQITEPLVHYEFIRMADSTGFGDYTESGQVIPVEYNGQAGGYTLAMYLDDHPPIAGGRELWGFPKKLASPTLHVNTDHILGTLDYGKVRVATGTMGYKHKDLDIEEQAKRLAGPNFLLKIIPHVDGTARVCELVRYYMQDIKMKGAWTGPASLELAPHALAPVADLPVLEIVEARHIVADLTLGLGEVVYDYLAQ.

Lys116 acts as the Schiff-base intermediate with acetoacetate in catalysis.

The protein belongs to the ADC family.

It catalyses the reaction acetoacetate + H(+) = acetone + CO2. Functionally, catalyzes the conversion of acetoacetate to acetone and carbon dioxide. The sequence is that of Acetoacetate decarboxylase from Burkholderia ambifaria (strain MC40-6).